The sequence spans 450 residues: UDP-N-acetylmuramoylalanine--D-glutamate ligase (450 aa).

115–121 (GTNGKTT) is a binding site for ATP.

The protein belongs to the MurCDEF family.

Its subcellular location is the cytoplasm. It catalyses the reaction UDP-N-acetyl-alpha-D-muramoyl-L-alanine + D-glutamate + ATP = UDP-N-acetyl-alpha-D-muramoyl-L-alanyl-D-glutamate + ADP + phosphate + H(+). The protein operates within cell wall biogenesis; peptidoglycan biosynthesis. Cell wall formation. Catalyzes the addition of glutamate to the nucleotide precursor UDP-N-acetylmuramoyl-L-alanine (UMA). This Desulfatibacillum aliphaticivorans protein is UDP-N-acetylmuramoylalanine--D-glutamate ligase.